A 93-amino-acid polypeptide reads, in one-letter code: Peptide YY-like (93 aa).

Positions 1–27 (MVSPRVRLAALALSVCAILCLGMHASA) are cleaved as a signal peptide. Residue tyrosine 63 is modified to Tyrosine amide. The propeptide at 65-93 (KRALTPENWIYRDPAEERVTYGLDDYAMW) is C-terminal extension.

It belongs to the NPY family. In terms of tissue distribution, gut and medial reticulospinal neuron system in the brainstem.

The protein localises to the secreted. In terms of biological role, gastrointestinal hormone and neuropeptide. The polypeptide is Peptide YY-like (pyy) (Lampetra fluviatilis (European river lamprey)).